A 224-amino-acid polypeptide reads, in one-letter code: uncharacterized protein (224 aa).

The next 6 membrane-spanning stretches (helical) occupy residues 25–45, 54–74, 91–111, 119–139, 142–162, and 174–194; these read MMLA…IPFF, ISVV…SLTI, IGVL…RLYF, FCWI…LTTL, ILIT…NFLI, and HFFF…YSFF.

The protein localises to the cell membrane. This is an uncharacterized protein from Mycoplasma genitalium (strain ATCC 33530 / DSM 19775 / NCTC 10195 / G37) (Mycoplasmoides genitalium).